Here is a 636-residue protein sequence, read N- to C-terminus: ATP-dependent zinc metalloprotease FtsH 1 (636 aa).

At 1 to 18 the chain is on the cytoplasmic side; the sequence is MKLSPPKKNLPPQKNNEP. A helical membrane pass occupies residues 19–39; that stretch reads PFPYLRLLVQVGIALFLVWIW. At 40-126 the chain is on the periplasmic side; sequence QESLHKATVS…YGSVKPSLLS (87 aa). Residues 127–147 form a helical membrane-spanning segment; the sequence is QILFSWVVPILIFFLVWFALA. Residues 148–636 are Cytoplasmic-facing; sequence RFMGGGGAGY…KEAPSYSSTL (489 aa). 220–227 lines the ATP pocket; it reads GPPGTGKT. Position 442 (His-442) interacts with Zn(2+). Glu-443 is a catalytic residue. Zn(2+) is bound by residues His-446 and Asp-519.

In the central section; belongs to the AAA ATPase family. This sequence in the C-terminal section; belongs to the peptidase M41 family. Homohexamer. Zn(2+) is required as a cofactor.

The protein localises to the cell inner membrane. Its function is as follows. Acts as a processive, ATP-dependent zinc metallopeptidase for both cytoplasmic and membrane proteins. Plays a role in the quality control of integral membrane proteins. The polypeptide is ATP-dependent zinc metalloprotease FtsH 1 (Methylacidiphilum infernorum (isolate V4) (Methylokorus infernorum (strain V4))).